A 599-amino-acid chain; its full sequence is Elongation factor 4 (599 aa).

The region spanning 4-186 is the tr-type G domain; the sequence is EHIRNFSIIA…EIVKKIPPPQ (183 aa). GTP-binding positions include 16 to 21 and 133 to 136; these read DHGKST and NKID.

This sequence belongs to the TRAFAC class translation factor GTPase superfamily. Classic translation factor GTPase family. LepA subfamily.

It localises to the cell inner membrane. It carries out the reaction GTP + H2O = GDP + phosphate + H(+). Required for accurate and efficient protein synthesis under certain stress conditions. May act as a fidelity factor of the translation reaction, by catalyzing a one-codon backward translocation of tRNAs on improperly translocated ribosomes. Back-translocation proceeds from a post-translocation (POST) complex to a pre-translocation (PRE) complex, thus giving elongation factor G a second chance to translocate the tRNAs correctly. Binds to ribosomes in a GTP-dependent manner. The sequence is that of Elongation factor 4 from Geobacter sp. (strain M21).